A 122-amino-acid chain; its full sequence is Small ribosomal subunit protein uS13 (122 aa).

The segment covering 95–116 has biased composition (basic residues); sequence GLPVRGQKTKTNARTRKGRRKT. Positions 95-122 are disordered; it reads GLPVRGQKTKTNARTRKGRRKTVGAATK.

It belongs to the universal ribosomal protein uS13 family. In terms of assembly, part of the 30S ribosomal subunit. Forms a loose heterodimer with protein S19. Forms two bridges to the 50S subunit in the 70S ribosome.

Its function is as follows. Located at the top of the head of the 30S subunit, it contacts several helices of the 16S rRNA. In the 70S ribosome it contacts the 23S rRNA (bridge B1a) and protein L5 of the 50S subunit (bridge B1b), connecting the 2 subunits; these bridges are implicated in subunit movement. Contacts the tRNAs in the A and P-sites. The polypeptide is Small ribosomal subunit protein uS13 (Campylobacter concisus (strain 13826)).